Here is a 612-residue protein sequence, read N- to C-terminus: Putative pentatricopeptide repeat-containing protein At5g40405 (612 aa).

PPR repeat units lie at residues 70–104 (TLFA…GNDL), 107–141 (DNYT…GFDN), 142–172 (DPHV…IPCP), 173–203 (DFVC…MPER), 204–238 (DPIA…GVKV), 239–273 (NGVA…KIKI), 274–304 (TVRL…MEEK), 305–339 (NVYT…GVTP), 340–375 (NAVT…GIEP), and 376–410 (QLEH…PHAA). The type E motif stretch occupies residues 411–486 (VWSSLLHASR…QPGCSVMEVN (76 aa)). Residues 487-517 (GEVHEFFVGDKSHPKYTQIDAVWKDISRRLR) are type E(+) motif. Residues 518 to 612 (LAGYKADTTP…DGHCSCNGFW (95 aa)) form a type DYW motif region.

It belongs to the PPR family. PCMP-H subfamily.

This is Putative pentatricopeptide repeat-containing protein At5g40405 (PCMP-H14) from Arabidopsis thaliana (Mouse-ear cress).